Here is a 724-residue protein sequence, read N- to C-terminus: Aquaglyceroporin-4 (724 aa).

Disordered stretches follow at residues 1–167 (MADE…SIRR), 248–267 (INMA…NQAD), and 302–396 (AHGL…DLDG). At 1 to 434 (MADEEIKPTS…VIRLRFREPL (434 aa)) the chain is on the cytoplasmic side. The segment covering 87-96 (LTGQVPQDND) has biased composition (polar residues). Residues 252–265 (QQQQQQQQQQPQNQ) are compositionally biased toward low complexity. Composition is skewed to polar residues over residues 307-325 (SPTN…TAPS) and 360-370 (PSQTSQNSQNE). The helical transmembrane segment at 435 to 455 (AELLAVTCQLTLGFCADLVVV) threads the bilayer. Over 456–472 (TSGKNASPAGNEATTDW) the chain is Extracellular. The chain crosses the membrane as a helical span at residues 473 to 493 (AWGLASMLGIYIAGGISGAHL). The NPA 1 motif lies at 494 to 496 (NPA). Over 494–513 (NPAISIMLWIYRGFPLRKVP) the chain is Cytoplasmic. A helical transmembrane segment spans residues 514 to 534 (MYVLAQILGAFIAALISFGLY). Topologically, residues 535–567 (QTNIVEYGGTDLKTSDTMGAFITYPRYPWINAS) are extracellular. The N-linked (GlcNAc...) asparagine glycan is linked to Asn565. Residues 568 to 588 (TSFFTEFVGTAILAVAVLALG) form a helical membrane-spanning segment. Residues 589–595 (DDMNAPP) lie on the Cytoplasmic side of the membrane. The helical transmembrane segment at 596–616 (GAGMSAFILGLVITVLSMAFG) threads the bilayer. At 617–647 (YNTGAALNPSRDLGPRLALAALGYGKDLFTD) the chain is on the extracellular side. The NPA 2 motif lies at 624–626 (NPS). Residues 648–668 (VYWIWGNWCAPILGAIFGAFL) traverse the membrane as a helical segment. Residues 669-724 (YDAAIFAGGESPVNYPRKRIKRAGHKWRKKWGVRLRKMKPAKKGEDEAYRRWKESQ) lie on the Cytoplasmic side of the membrane.

It belongs to the MIP/aquaporin (TC 1.A.8) family.

Its subcellular location is the membrane. The catalysed reaction is H2O(in) = H2O(out). The enzyme catalyses glycerol(in) = glycerol(out). Its function is as follows. Water channel required to facilitate the transport of water across membranes. May play a role in the vegetative growth. The sequence is that of Aquaglyceroporin-4 from Botryotinia fuckeliana (strain B05.10) (Noble rot fungus).